A 250-amino-acid polypeptide reads, in one-letter code: 3alpha-hydroxysteroid dehydrogenase (250 aa).

Residues N93, Y158, and K162 each coordinate NADP(+). Y158 functions as the Proton acceptor in the catalytic mechanism.

Belongs to the short-chain dehydrogenases/reductases (SDR) family.

The catalysed reaction is lithocholate + NADP(+) = 3-oxo-5beta-cholan-24-oate + NADPH + H(+). It catalyses the reaction deoxycholate + NADP(+) = 12alpha-hydroxy-3-oxo-5beta-cholan-24-oate + NADPH + H(+). The enzyme catalyses deoxycholate + NAD(+) = 12alpha-hydroxy-3-oxo-5beta-cholan-24-oate + NADH + H(+). It carries out the reaction cholate + NADP(+) = 7alpha,12alpha-dihydroxy-3-oxo-5beta-cholan-24-oate + NADPH + H(+). The catalysed reaction is chenodeoxycholate + NADP(+) = 3-oxochenodeoxycholate + NADPH + H(+). Functionally, involved in the modification of secondary bile acids into iso-bile acids (3beta-bile acids) via epimerization of the 3-OH group through a 3-oxo-intermediate. Catalyzes the oxidation of deoxycholate (DCA) and lithocholate (LCA) to yield 12-alpha-hydroxy-3-oxo-5-beta-cholan-24-oate (3-oxo-DCA) and 3-oxo-5-beta-cholan-24-oate (3-oxo-LCA), respectively. Is also able to catalyze the oxidation of cholate (CA) and chenodeoxycholate (CDCA) into 3-dehydrocholate (3-oxo-CA) and 7-alpha-hydroxy-3-oxo-5-beta-cholan-24-oate (3-oxo-CDCA), respectively. Can also catalyze the reverse reactions in vitro. Accepts both NADPH and NADH as cosubstrates. The conversion of the abundant bile acid DCA into isoDCA by the gut bacterium R.gnavus favors the growth of the keystone commensal genus Bacteroides, since isoDCA is less cytotoxic than its parent compound, DCA; iso-bile acids have thus a potential role in modulating gut community composition. The polypeptide is 3alpha-hydroxysteroid dehydrogenase (Mediterraneibacter gnavus (strain ATCC 29149 / DSM 114966 / JCM 6515 / VPI C7-9) (Ruminococcus gnavus)).